Here is a 496-residue protein sequence, read N- to C-terminus: Ganglioside-induced differentiation-associated protein 2 (496 aa).

Disordered regions lie at residues 22 to 45 and 252 to 271; these read VRDGEGEDVPDGGRKDAPHGGLHS and PERQIRISEKPGGQDDDSEE. The region spanning 44–224 is the Macro domain; the sequence is HSPFPYRNDI…TYRRLLPLYF (181 aa). The span at 254 to 264 shows a compositional bias: basic and acidic residues; sequence RQIRISEKPGG. Residues 329-483 enclose the CRAL-TRIO domain; it reads DLSDIAALKA…FVLDYDAREN (155 aa).

This sequence belongs to the GDAP2 family.

The protein is Ganglioside-induced differentiation-associated protein 2 of Xenopus tropicalis (Western clawed frog).